We begin with the raw amino-acid sequence, 450 residues long: FAD-linked oxidoreductase penO (450 aa).

In terms of domain architecture, FAD-binding PCMH-type spans 32–203 (PPELPYAIVK…TRFFIRTRPA (172 aa)).

It belongs to the oxygen-dependent FAD-linked oxidoreductase family. FAD is required as a cofactor.

It participates in secondary metabolite biosynthesis. Its function is as follows. FAD-linked oxidoreductase; part of the gene cluster that mediates the biosynthesis of the indole diterpenes penitrems. The geranylgeranyl diphosphate (GGPP) synthase penG catalyzes the first step in penitrem biosynthesis via conversion of farnesyl pyrophosphate and isopentyl pyrophosphate into geranylgeranyl pyrophosphate (GGPP). Condensation of indole-3-glycerol phosphate with GGPP by the prenyl transferase penC then forms 3-geranylgeranylindole (3-GGI). Epoxidation by the FAD-dependent monooxygenase penM leads to a epoxidized-GGI that is substrate of the terpene cyclase penB for cyclization to yield paspaline. Paspaline is subsequently converted to 13-desoxypaxilline by the cytochrome P450 monooxygenase penP, the latter being then converted to paxilline by the cytochrome P450 monooxygenase penQ. Paxilline is converted to beta-paxitriol via C-10 ketoreduction by the short-chain dehydrogenase PC-15 which can be monoprenylated at the C-20 by the indole diterpene prenyltransferase penD. A two-step elimination (acetylation and elimination) process performed by the O-acetyltransferase PC-16 and the P.simplicissimum ptmI-ortholog not yet identified in P.crustosum, leads to the production of the prenylated form of penijanthine. The FAD-linked oxidoreductase ptmO then converts the prenylated form of penijanthine into PC-M5 which is in turn transformed into PC-M4 by the aromatic dimethylallyltransferase PC-22. A series of oxidation steps involving 4 cytochrome P450 monooxygenases (PC-21, PC-05, PC-23, PC-20) and a FAD-dependent monooxygenase (PC-14) are required for the transformation of PC-M4 to penitrems A and E. Synthesis of these final products is proposed to proceed via penitrems D and C (PC-21, PC-05, PC-14) and penitrems B and F (PC-21, PC-05, PC-14, PC-23). In Penicillium crustosum (Blue mold fungus), this protein is FAD-linked oxidoreductase penO.